We begin with the raw amino-acid sequence, 148 residues long: Glutamyl-tRNA(Gln) amidotransferase subunit C, mitochondrial (148 aa).

It belongs to the GatC family. Subunit of the heterotrimeric GatCAB amidotransferase (AdT) complex, composed of A, B and C subunits.

It is found in the mitochondrion. The enzyme catalyses L-glutamyl-tRNA(Gln) + L-glutamine + ATP + H2O = L-glutaminyl-tRNA(Gln) + L-glutamate + ADP + phosphate + H(+). Allows the formation of correctly charged Gln-tRNA(Gln) through the transamidation of misacylated Glu-tRNA(Gln) in the mitochondria. The reaction takes place in the presence of glutamine and ATP through an activated gamma-phospho-Glu-tRNA(Gln). The sequence is that of Glutamyl-tRNA(Gln) amidotransferase subunit C, mitochondrial from Drosophila sechellia (Fruit fly).